The following is a 250-amino-acid chain: Cobalt transport protein CbiM (250 aa).

The first 25 residues, 1–25 (MKQNIKLGVIAALMLIVLTPVTSNA), serve as a signal peptide directing secretion. 6 helical membrane-spanning segments follow: residues 33 to 53 (LPVK…LVGL), 68 to 88 (VLLA…IPSV), 100 to 120 (LGAI…VLIF), 132 to 152 (TLGA…FLIF), 163 to 183 (AMPV…VTSI), and 205 to 225 (GIFF…TVIV).

Belongs to the CbiM family. In terms of assembly, forms an energy-coupling factor (ECF) transporter complex composed of an ATP-binding protein (A component, CbiO), a transmembrane protein (T component, CbiQ) and 2 possible substrate-capture proteins (S components, CbiM and CbiN) of unknown stoichimetry.

The protein localises to the cell membrane. The protein operates within cofactor biosynthesis; adenosylcobalamin biosynthesis. Part of the energy-coupling factor (ECF) transporter complex CbiMNOQ involved in cobalt import. The sequence is that of Cobalt transport protein CbiM from Clostridioides difficile (strain R20291) (Peptoclostridium difficile).